We begin with the raw amino-acid sequence, 51 residues long: Insulin (51 aa).

3 disulfide bridges follow: Cys-7–Cys-37, Cys-19–Cys-50, and Cys-36–Cys-41.

The protein belongs to the insulin family. Heterodimer of a B chain and an A chain linked by two disulfide bonds.

Its subcellular location is the secreted. Its function is as follows. Insulin decreases blood glucose concentration. It increases cell permeability to monosaccharides, amino acids and fatty acids. It accelerates glycolysis, the pentose phosphate cycle, and glycogen synthesis in liver. This chain is Insulin (INS), found in Meleagris gallopavo (Wild turkey).